The primary structure comprises 382 residues: Galactokinase (382 aa).

34-37 (EHTD) contacts substrate. 124–130 (GAGLSSS) provides a ligand contact to ATP. Mg(2+) contacts are provided by serine 130 and glutamate 162. Catalysis depends on aspartate 174, which acts as the Proton acceptor. Substrate is bound at residue tyrosine 223.

This sequence belongs to the GHMP kinase family. GalK subfamily.

It is found in the cytoplasm. It carries out the reaction alpha-D-galactose + ATP = alpha-D-galactose 1-phosphate + ADP + H(+). Its pathway is carbohydrate metabolism; galactose metabolism. Catalyzes the transfer of the gamma-phosphate of ATP to D-galactose to form alpha-D-galactose-1-phosphate (Gal-1-P). In Shigella boydii serotype 4 (strain Sb227), this protein is Galactokinase.